The following is a 446-amino-acid chain: MSRKYFGTDGIRGRVGEYPITPDFMLKLGWAAGMAFRKQGHCRVLVGKDTRISGYMFESALEAGLSAAGADVMLLGPMPTPAIAYLTRTFHAEAGIVISASHNPHDDNGIKFFSGQGTKLPDEVELMIEELLDQPMTVIESGKLGKVSRINDAAGRYIEFCKSSVPSSTSFEGLKLVVDCAHGATYKVAPSVFRELGADVTVLHAQPDGLNINEGCGSTHIESLQAAVLVGHADLGIAFDGDGDRVLMVDHTGAIVDGDELLFIIARDLQEHGKLQGGVVGTLMSNLGLELALKDLDIPFVRAKVGDRYVMAELLEREWLVGGENSGHVVCCNHTTTGDAIIAALQVLMALKRRGETLAQARQALRKCPQVLINVRFGASKVDPLEHPAVKEASAKVTDALAGRGRVLLRKSGTEPLVRVMVEGEDESQVRAHAEALAKLVSEVCV.

S101 (phosphoserine intermediate) is an active-site residue. Positions 101, 240, 242, and 244 each coordinate Mg(2+). S101 is subject to Phosphoserine.

Belongs to the phosphohexose mutase family. Requires Mg(2+) as cofactor. In terms of processing, activated by phosphorylation.

It carries out the reaction alpha-D-glucosamine 1-phosphate = D-glucosamine 6-phosphate. Catalyzes the conversion of glucosamine-6-phosphate to glucosamine-1-phosphate. The protein is Phosphoglucosamine mutase of Pseudomonas putida (strain ATCC 700007 / DSM 6899 / JCM 31910 / BCRC 17059 / LMG 24140 / F1).